We begin with the raw amino-acid sequence, 156 residues long: ATP synthase subunit b (156 aa).

Residues 7-27 (LFAQIIVFFGLVWFTMKFVWP) traverse the membrane as a helical segment.

The protein belongs to the ATPase B chain family. In terms of assembly, F-type ATPases have 2 components, F(1) - the catalytic core - and F(0) - the membrane proton channel. F(1) has five subunits: alpha(3), beta(3), gamma(1), delta(1), epsilon(1). F(0) has three main subunits: a(1), b(2) and c(10-14). The alpha and beta chains form an alternating ring which encloses part of the gamma chain. F(1) is attached to F(0) by a central stalk formed by the gamma and epsilon chains, while a peripheral stalk is formed by the delta and b chains.

The protein localises to the cell inner membrane. In terms of biological role, f(1)F(0) ATP synthase produces ATP from ADP in the presence of a proton or sodium gradient. F-type ATPases consist of two structural domains, F(1) containing the extramembraneous catalytic core and F(0) containing the membrane proton channel, linked together by a central stalk and a peripheral stalk. During catalysis, ATP synthesis in the catalytic domain of F(1) is coupled via a rotary mechanism of the central stalk subunits to proton translocation. Functionally, component of the F(0) channel, it forms part of the peripheral stalk, linking F(1) to F(0). This is ATP synthase subunit b from Neisseria meningitidis serogroup C (strain 053442).